We begin with the raw amino-acid sequence, 102 residues long: Protein translation factor SUI1 homolog (102 aa).

Belongs to the SUI1 family.

This is Protein translation factor SUI1 homolog from Nitrosopumilus maritimus (strain SCM1).